Here is a 1358-residue protein sequence, read N- to C-terminus: DNA-directed RNA polymerase subunit beta (1358 aa).

It belongs to the RNA polymerase beta chain family. The RNAP catalytic core consists of 2 alpha, 1 beta, 1 beta' and 1 omega subunit. When a sigma factor is associated with the core the holoenzyme is formed, which can initiate transcription.

The enzyme catalyses RNA(n) + a ribonucleoside 5'-triphosphate = RNA(n+1) + diphosphate. Its function is as follows. DNA-dependent RNA polymerase catalyzes the transcription of DNA into RNA using the four ribonucleoside triphosphates as substrates. This is DNA-directed RNA polymerase subunit beta from Francisella philomiragia subsp. philomiragia (strain ATCC 25017 / CCUG 19701 / FSC 153 / O#319-036).